The primary structure comprises 206 residues: Translation initiation factor IF-3 (206 aa).

The protein belongs to the IF-3 family. In terms of assembly, monomer.

It is found in the cytoplasm. In terms of biological role, IF-3 binds to the 30S ribosomal subunit and shifts the equilibrium between 70S ribosomes and their 50S and 30S subunits in favor of the free subunits, thus enhancing the availability of 30S subunits on which protein synthesis initiation begins. The chain is Translation initiation factor IF-3 from Shigella flexneri.